A 509-amino-acid polypeptide reads, in one-letter code: MNDDIIILLSVFCGIFFICFIICSSIALYLWKSKSRKRLVEQYTKEAKQAKKQILANGYKEISEAKMLFLKRSELEKNELDRVKEQLELRSNDLKRNQEIVESKSQRLDASLLDLEKRKFLLDKKEEYLIKILEDASGLTKSQAKELLIKQVKNKSEKELISILKNAELQAHSSSKMIANNIIISAMERIKVELTSQRTTNIVKLPSDDLKGRIIGKDGRNMKAFEQIGGVDIVVDETPNTVVVSSFNPIRREIATRTLEQLIIDGRIQPIKIENELKKQEQELEYIIQETGLSTIKELNINDIDIELVKLIGKLKFRTSYGQNVLAHSIEVAKLSGAIASELGLDVEKAIRAGLLHDIGKAIDFEKQGSHVVLGAEIAKKYNEDPIIINCIESHHEDKEKESEIAAIVAIADSISASRPGARYNAIDEFILRMTEIEKIGNSIPGVAKTYALQSGRQIRLIVNPLVASDLDLAMILEKMKEEIKNKVIIPGEITITVIRERKETDVLK.

Residues 5–25 (IIILLSVFCGIFFICFIICSS) traverse the membrane as a helical segment. Residues 199–259 (TTNIVKLPSD…IRREIATRTL (61 aa)) enclose the KH domain. The HD domain occupies 325–418 (VLAHSIEVAK…VAIADSISAS (94 aa)).

The protein belongs to the RNase Y family.

It localises to the cell membrane. Functionally, endoribonuclease that initiates mRNA decay. The protein is Ribonuclease Y of Mycoplasma mycoides subsp. mycoides SC (strain CCUG 32753 / NCTC 10114 / PG1).